Consider the following 180-residue polypeptide: MRFYYTLLATAAALLVHSDALSAAAETSLNQLTAVDGTTTTSQRFLRRHTDSETTDNEERLNSGPIVLDTAKKIDDLFEVEKLDKILDPKMADKFLDGKTFFGWLDKSALDEALNGNIAQKTKVFEHWREKRLRPKALTKVLTTDPAVRKKYKFVYEMYDSYIKYVARKKLSGLKRNRGD.

The first 24 residues, 1–24 (MRFYYTLLATAAALLVHSDALSAA), serve as a signal peptide directing secretion. Positions 44 to 60 (RFLRRHTDSETTDNEER) match the RxLR-dEER motif.

This sequence belongs to the RxLR effector family.

It is found in the secreted. The protein resides in the host cell. Secreted effector that partially suppresses elicitor-induced cell death in host and enhances virulence of P.parasitica. In Phytophthora nicotianae (Potato buckeye rot agent), this protein is Secreted RxLR effector protein 5.